Here is a 1838-residue protein sequence, read N- to C-terminus: Nuclear pore complex protein NUP205 (1838 aa).

The protein belongs to the NUP186/NUP192/NUP205 family. In terms of assembly, part of the nuclear pore complex (NPC). The NPC has an eight-fold symmetrical structure comprising a central transport channel and two rings, the cytoplasmic and nuclear rings, to which eight filaments are attached. The cytoplasmic filaments have loose ends, while the nuclear filaments are joined in a distal ring, forming a nuclear basket. NPCs are highly dynamic in configuration and composition, and can be devided in 3 subcomplexes, the NUP62 subcomplex, the NUP107-160 subcomplex and the NUP93 subcomplex, containing approximately 30 different nucleoporin proteins.

The protein resides in the nucleus envelope. Its subcellular location is the nucleus. It localises to the nuclear pore complex. The chain is Nuclear pore complex protein NUP205 from Arabidopsis thaliana (Mouse-ear cress).